The following is a 505-amino-acid chain: Flagellin (505 aa).

This sequence belongs to the bacterial flagellin family.

The protein localises to the secreted. It localises to the bacterial flagellum. In terms of biological role, flagellin is the subunit protein which polymerizes to form the filaments of bacterial flagella. This is Flagellin (fliC) from Salmonella enteritidis.